We begin with the raw amino-acid sequence, 197 residues long: MQFKHKGLIIILSSPSGTGKSSLAKELLKIDNNLRLSISVTTRKPRLGEVDGINYYFKTDLEFKTLVKQNKFLEYAKIYNDYYGTPKEYVKMLLKQGLDVLFDIDWQGVRSIKKNTNNVVTIFVLPPSLEILEQRLRNRATDNEETIKLRMQSAQHEISYANEYDYVVINDDFGQTLKKIHEIIVAERAKNFSYHAH.

A Guanylate kinase-like domain is found at 7–185 (GLIIILSSPS…TLKKIHEIIV (179 aa)). 14 to 21 (SPSGTGKS) is an ATP binding site.

This sequence belongs to the guanylate kinase family.

Its subcellular location is the cytoplasm. It carries out the reaction GMP + ATP = GDP + ADP. In terms of biological role, essential for recycling GMP and indirectly, cGMP. This chain is Guanylate kinase, found in Rickettsia typhi (strain ATCC VR-144 / Wilmington).